A 424-amino-acid polypeptide reads, in one-letter code: Protein-glutamate methylesterase/protein-glutamine glutaminase (424 aa).

In terms of domain architecture, Response regulatory spans 6–123 (RVLVVDDSAF…SLDDFTRQLT (118 aa)). Aspartate 57 carries the post-translational modification 4-aspartylphosphate. The interval 177–210 (SRLSPGRSPGGKEGVAGAVSAGSTRGEAIRPGKG) is disordered. Residues 229–423 (RRPGIEVVAI…PAIVALVTGA (195 aa)) enclose the CheB-type methylesterase domain. Active-site residues include serine 241, histidine 268, and aspartate 365.

The protein belongs to the CheB family. In terms of processing, phosphorylated by CheA. Phosphorylation of the N-terminal regulatory domain activates the methylesterase activity.

It is found in the cytoplasm. The enzyme catalyses [protein]-L-glutamate 5-O-methyl ester + H2O = L-glutamyl-[protein] + methanol + H(+). The catalysed reaction is L-glutaminyl-[protein] + H2O = L-glutamyl-[protein] + NH4(+). Its function is as follows. Involved in chemotaxis. Part of a chemotaxis signal transduction system that modulates chemotaxis in response to various stimuli. Catalyzes the demethylation of specific methylglutamate residues introduced into the chemoreceptors (methyl-accepting chemotaxis proteins or MCP) by CheR. Also mediates the irreversible deamidation of specific glutamine residues to glutamic acid. This is Protein-glutamate methylesterase/protein-glutamine glutaminase from Moorella thermoacetica (strain ATCC 39073 / JCM 9320).